The primary structure comprises 290 residues: Diaminopimelate epimerase (290 aa).

Substrate-binding residues include asparagine 17, glutamine 49, and asparagine 69. Catalysis depends on cysteine 78, which acts as the Proton donor. Residues 79–80 (GN), asparagine 165, asparagine 198, and 216–217 (ER) contribute to the substrate site. Cysteine 225 (proton acceptor) is an active-site residue. Position 226 to 227 (226 to 227 (GS)) interacts with substrate.

Belongs to the diaminopimelate epimerase family. In terms of assembly, homodimer.

Its subcellular location is the cytoplasm. The catalysed reaction is (2S,6S)-2,6-diaminopimelate = meso-2,6-diaminopimelate. It participates in amino-acid biosynthesis; L-lysine biosynthesis via DAP pathway; DL-2,6-diaminopimelate from LL-2,6-diaminopimelate: step 1/1. Catalyzes the stereoinversion of LL-2,6-diaminopimelate (L,L-DAP) to meso-diaminopimelate (meso-DAP), a precursor of L-lysine and an essential component of the bacterial peptidoglycan. The protein is Diaminopimelate epimerase of Methylocella silvestris (strain DSM 15510 / CIP 108128 / LMG 27833 / NCIMB 13906 / BL2).